The primary structure comprises 176 residues: Large ribosomal subunit protein uL6 (176 aa).

The protein belongs to the universal ribosomal protein uL6 family. As to quaternary structure, part of the 50S ribosomal subunit.

In terms of biological role, this protein binds to the 23S rRNA, and is important in its secondary structure. It is located near the subunit interface in the base of the L7/L12 stalk, and near the tRNA binding site of the peptidyltransferase center. This chain is Large ribosomal subunit protein uL6, found in Burkholderia mallei (strain NCTC 10247).